The sequence spans 152 residues: Deoxyuridine 5'-triphosphate nucleotidohydrolase (152 aa).

Substrate contacts are provided by residues 71–73 (RSG), N84, 88–90 (LID), and M98.

This sequence belongs to the dUTPase family. As to quaternary structure, homotrimer. Mg(2+) serves as cofactor.

It carries out the reaction dUTP + H2O = dUMP + diphosphate + H(+). It functions in the pathway pyrimidine metabolism; dUMP biosynthesis; dUMP from dCTP (dUTP route): step 2/2. In terms of biological role, this enzyme is involved in nucleotide metabolism: it produces dUMP, the immediate precursor of thymidine nucleotides and it decreases the intracellular concentration of dUTP so that uracil cannot be incorporated into DNA. This chain is Deoxyuridine 5'-triphosphate nucleotidohydrolase, found in Escherichia coli O1:K1 / APEC.